Reading from the N-terminus, the 428-residue chain is Aerobic C4-dicarboxylate transport protein (428 aa).

Helical transmembrane passes span 5–27, 47–64, 77–99, 141–163, 184–206, 216–238, 289–311, 326–348, and 353–375; these read LFKSLYFQVLTAIAIGILLGHYY, MIIAPVIFCTVVTGIAGM, ALLYFEIVSTIALINGLIIVNVV, VIGAFASGNILQVLLFAVLFGFA, VIFGIINMIMRLAPIGAFGAMAF, LVQLGQLIICFYITCILFVVVVL, VVGLVIPTGYSFNLDGTSIYLTM, IFHQITLLVVLLLSSKGAAGVTG, and VLAATISAVGHLPVAGLALILGI.

Belongs to the dicarboxylate/amino acid:cation symporter (DAACS) (TC 2.A.23) family.

It localises to the cell inner membrane. Its function is as follows. Responsible for the transport of dicarboxylates such as succinate, fumarate, and malate from the periplasm across the membrane. The protein is Aerobic C4-dicarboxylate transport protein of Salmonella typhi.